The chain runs to 203 residues: FMN-dependent NADH:quinone oxidoreductase 5 (203 aa).

Residues Ser9, Ser15–Ser17, Met95–Phe98, and Thr139–Gly142 contribute to the FMN site.

This sequence belongs to the azoreductase type 1 family. Homodimer. FMN serves as cofactor.

The catalysed reaction is 2 a quinone + NADH + H(+) = 2 a 1,4-benzosemiquinone + NAD(+). It catalyses the reaction N,N-dimethyl-1,4-phenylenediamine + anthranilate + 2 NAD(+) = 2-(4-dimethylaminophenyl)diazenylbenzoate + 2 NADH + 2 H(+). Quinone reductase that provides resistance to thiol-specific stress caused by electrophilic quinones. In terms of biological role, also exhibits azoreductase activity. Catalyzes the reductive cleavage of the azo bond in aromatic azo compounds to the corresponding amines. This is FMN-dependent NADH:quinone oxidoreductase 5 from Pseudomonas fluorescens (strain ATCC BAA-477 / NRRL B-23932 / Pf-5).